A 247-amino-acid polypeptide reads, in one-letter code: Oil body-associated protein 2B (247 aa).

The tract at residues 1–28 (MASSDKVPVACPASSGDGKEPMGNPTKT) is disordered.

The protein belongs to the OBAP family.

This Arabidopsis thaliana (Mouse-ear cress) protein is Oil body-associated protein 2B.